Here is a 507-residue protein sequence, read N- to C-terminus: Histidine ammonia-lyase (507 aa).

The 5-imidazolinone (Ala-Gly) cross-link spans 142 to 144 (ASG). Position 143 is a 2,3-didehydroalanine (Ser) (serine 143).

It belongs to the PAL/histidase family. In terms of processing, contains an active site 4-methylidene-imidazol-5-one (MIO), which is formed autocatalytically by cyclization and dehydration of residues Ala-Ser-Gly.

It localises to the cytoplasm. The catalysed reaction is L-histidine = trans-urocanate + NH4(+). It participates in amino-acid degradation; L-histidine degradation into L-glutamate; N-formimidoyl-L-glutamate from L-histidine: step 1/3. The protein is Histidine ammonia-lyase of Symbiobacterium thermophilum (strain DSM 24528 / JCM 14929 / IAM 14863 / T).